Here is a 49-residue protein sequence, read N- to C-terminus: Protein OPG059 (49 aa).

Met1 is a topological domain (virion surface). The chain crosses the membrane as a helical span at residues 2–22 (VIGLVIFVSVAAAIVGVLSNV). The Intravirion segment spans residues 23-49 (LDMLMYVEENNEEDARIKEEQELLLLY).

The protein belongs to the orthopoxvirus OPG058 family.

It localises to the virion membrane. Its subcellular location is the host membrane. May play a role in cell adhesion and is important for virus virulence in vivo, although it is not required for the virus life cycle in cell cultures. The protein is Protein OPG059 (OPG059) of Vaccinia virus (strain Western Reserve) (VACV).